The sequence spans 151 residues: Minor curlin subunit (151 aa).

The N-terminal stretch at 1–21 (MKNKLLFMMLTILGAPGIAAA) is a signal peptide.

The protein belongs to the CsgA/CsgB family.

The protein resides in the fimbrium. Functionally, curlin is the structural subunit of the curli. Curli are coiled surface structures that assemble preferentially at growth temperatures below 37 degrees Celsius. Curli can bind to fibronectin. The minor subunit is the nucleation component of curlin monomers. This chain is Minor curlin subunit (csgB), found in Escherichia coli O157:H7.